Consider the following 391-residue polypeptide: ATP-sensitive inward rectifier potassium channel 1 (391 aa).

Residues 1 to 77 (MNASSRNVFD…IWTTVLDLKW (77 aa)) lie on the Cytoplasmic side of the membrane. Ser-44 is modified (phosphoserine; by SGK1). Residues 78 to 102 (RYKMTIFITAFLGSWFFFGLLWYAV) form a helical membrane-spanning segment. Topologically, residues 103 to 127 (AYIHKDLPEFHPSANHTPCVENING) are extracellular. Residue Asn-117 is glycosylated (N-linked (GlcNAc...) asparagine). The helical; Pore-forming intramembrane region spans 128 to 139 (LTSAFLFSLETQ). The segment at residues 140–146 (VTIGYGF) is an intramembrane region (pore-forming). The short motif at 141–146 (TIGYGF) is the Selectivity filter element. Residues 147–155 (RCVTEQCAT) are Extracellular-facing. The chain crosses the membrane as a helical span at residues 156 to 177 (AIFLLIFQSILGVIINSFMCGA). The Cytoplasmic portion of the chain corresponds to 178-391 (ILAKISRPKK…EVNETDDTKM (214 aa)). Positions 180–207 (AKISRPKKRAKTITFSKNAVISKRGGKL) are polyphosphoinositide (PIP2)-binding. Position 223 to 230 (223 to 230 (GSHIYGKL)) interacts with ATP.

This sequence belongs to the inward rectifier-type potassium channel (TC 1.A.2.1) family. KCNJ1 subfamily. In terms of assembly, interacts with SGK1 and SLC9A3R2/NHERF2. Post-translationally, phosphorylation at Ser-44 by SGK1 is necessary for its expression at the cell membrane. As to expression, in the kidney and pancreatic islets. Lower levels in skeletal muscle, pancreas, spleen, brain, heart and liver.

It localises to the cell membrane. The catalysed reaction is K(+)(in) = K(+)(out). Inhibited by WNK3. Activated by phosphatidylinositol 4,5 biphosphate (PtdIns(4,5)P2). Functionally, inward rectifier potassium channels are characterized by a greater tendency to allow potassium to flow into the cell rather than out of it. Their voltage dependence is regulated by the concentration of extracellular potassium; as external potassium is raised, the voltage range of the channel opening shifts to more positive voltages. The inward rectification is mainly due to the blockage of outward current by internal magnesium. This channel is activated by internal ATP and can be blocked by external barium. In the kidney, probably plays a major role in potassium homeostasis. This is ATP-sensitive inward rectifier potassium channel 1 (KCNJ1) from Homo sapiens (Human).